A 96-amino-acid chain; its full sequence is Nucleoid-associated protein CF0672 (96 aa).

It belongs to the YbaB/EbfC family. In terms of assembly, homodimer.

It is found in the cytoplasm. The protein resides in the nucleoid. Its function is as follows. Binds to DNA and alters its conformation. May be involved in regulation of gene expression, nucleoid organization and DNA protection. The protein is Nucleoid-associated protein CF0672 of Chlamydia felis (strain Fe/C-56) (Chlamydophila felis).